Here is a 42-residue protein sequence, read N- to C-terminus: Aspartate-semialdehyde dehydrogenase leader peptide (42 aa).

The polypeptide is Aspartate-semialdehyde dehydrogenase leader peptide (Streptococcus mutans serotype c (strain ATCC 700610 / UA159)).